A 351-amino-acid chain; its full sequence is Glycerol-3-phosphate dehydrogenase 1-like protein (351 aa).

12–17 (GSGNWG) is an NAD(+) binding site. Lysine 122 lines the substrate pocket. Alanine 155 is a binding site for NAD(+). The active-site Proton acceptor is lysine 206. NAD(+)-binding residues include arginine 271, lysine 298, and glutamine 300. Residue 271–272 (RN) coordinates substrate.

The protein belongs to the NAD-dependent glycerol-3-phosphate dehydrogenase family. As to quaternary structure, interacts with SCN5A.

The protein localises to the cytoplasm. The enzyme catalyses sn-glycerol 3-phosphate + NAD(+) = dihydroxyacetone phosphate + NADH + H(+). Plays a role in regulating cardiac sodium current; decreased enzymatic activity with resulting increased levels of glycerol 3-phosphate activating the DPD1L-dependent SCN5A phosphorylation pathway, may ultimately lead to decreased sodium current; cardiac sodium current may also be reduced due to alterations of NAD(H) balance induced by DPD1L. The chain is Glycerol-3-phosphate dehydrogenase 1-like protein (Gpd1l) from Mus musculus (Mouse).